The following is a 93-amino-acid chain: Pyrimidine/purine nucleoside phosphorylase (93 aa).

This sequence belongs to the nucleoside phosphorylase PpnP family.

The catalysed reaction is a purine D-ribonucleoside + phosphate = a purine nucleobase + alpha-D-ribose 1-phosphate. It catalyses the reaction adenosine + phosphate = alpha-D-ribose 1-phosphate + adenine. It carries out the reaction cytidine + phosphate = cytosine + alpha-D-ribose 1-phosphate. The enzyme catalyses guanosine + phosphate = alpha-D-ribose 1-phosphate + guanine. The catalysed reaction is inosine + phosphate = alpha-D-ribose 1-phosphate + hypoxanthine. It catalyses the reaction thymidine + phosphate = 2-deoxy-alpha-D-ribose 1-phosphate + thymine. It carries out the reaction uridine + phosphate = alpha-D-ribose 1-phosphate + uracil. The enzyme catalyses xanthosine + phosphate = alpha-D-ribose 1-phosphate + xanthine. Functionally, catalyzes the phosphorolysis of diverse nucleosides, yielding D-ribose 1-phosphate and the respective free bases. Can use uridine, adenosine, guanosine, cytidine, thymidine, inosine and xanthosine as substrates. Also catalyzes the reverse reactions. This Vibrio vulnificus (strain CMCP6) protein is Pyrimidine/purine nucleoside phosphorylase.